The following is a 106-amino-acid chain: NADH dehydrogenase [ubiquinone] 1 alpha subcomplex subunit 8-B (106 aa).

N-acetylserine is present on Ser2. CHCH domains are found at residues 26–67 and 68–106; these read GMRC…LKDL and HQKCQKEMDDYVGCMYYYTNEFDLCRKEQEAFEKVCPLK. 3 short sequence motifs (cx9C motif) span residues 29-39, 49-59, and 71-81; these read CMPENVAFLKC, CLDKGRDVTRC, and CQKEMDDYVGC. Disulfide bonds link Cys29–Cys59, Cys39–Cys49, Cys71–Cys103, and Cys81–Cys92. Positions 92–103 match the Cx10C motif motif; it reads CRKEQEAFEKVC.

The protein belongs to the complex I NDUFA8 subunit family. Complex I is composed of at least 49 different subunits.

It localises to the mitochondrion. Its subcellular location is the mitochondrion intermembrane space. In terms of biological role, accessory subunit of the mitochondrial membrane respiratory chain NADH dehydrogenase (Complex I), that is believed not to be involved in catalysis. Complex I functions in the transfer of electrons from NADH to the respiratory chain. The immediate electron acceptor for the enzyme is believed to be ubiquinone. This chain is NADH dehydrogenase [ubiquinone] 1 alpha subcomplex subunit 8-B, found in Arabidopsis thaliana (Mouse-ear cress).